We begin with the raw amino-acid sequence, 140 residues long: Peptide methionine sulfoxide reductase MsrB (140 aa).

The region spanning 9-131 is the MsrB domain; the sequence is DALWREKLTP…NSASIVLDSE (123 aa). The Zn(2+) site is built by C48, C51, C97, and C100. The active-site Nucleophile is the C120.

This sequence belongs to the MsrB Met sulfoxide reductase family. It depends on Zn(2+) as a cofactor.

It carries out the reaction L-methionyl-[protein] + [thioredoxin]-disulfide + H2O = L-methionyl-(R)-S-oxide-[protein] + [thioredoxin]-dithiol. This chain is Peptide methionine sulfoxide reductase MsrB, found in Cellvibrio japonicus (strain Ueda107) (Pseudomonas fluorescens subsp. cellulosa).